The chain runs to 345 residues: Guanine nucleotide-binding protein alpha-4 subunit (345 aa).

Residues 30 to 345 form the G-alpha domain; that stretch reads KDVKLLLLGP…TILSQALEHF (316 aa). A G1 motif region spans residues 33-46; the sequence is KLLLLGPGESGKST. GTP-binding positions include 38–45, 171–177, 196–200, 265–268, and alanine 320; these read GPGESGKS, LRCRVRT, DVGGQ, and NKKD. Residues serine 45 and threonine 177 each contribute to the Mg(2+) site. A G2 motif region spans residues 169–177; sequence DVLRCRVRT. The tract at residues 192 to 201 is G3 motif; that stretch reads LKIVDVGGQR. The tract at residues 261 to 268 is G4 motif; that stretch reads VLFLNKKD. A G5 motif region spans residues 318-323; it reads TCAVDT.

Belongs to the G-alpha family. In terms of assembly, g proteins are composed of 3 units; alpha, beta and gamma. The alpha chain contains the guanine nucleotide binding site.

Its function is as follows. Guanine nucleotide-binding proteins (G proteins) are involved as modulators or transducers in various transmembrane signaling systems. G alpha-4 plays a role in morphogenesis of the multicellular structure. The chain is Guanine nucleotide-binding protein alpha-4 subunit (gpaD) from Dictyostelium discoideum (Social amoeba).